A 273-amino-acid polypeptide reads, in one-letter code: Large ribosomal subunit protein uL2c (273 aa).

2 disordered regions span residues 30–55 and 222–243; these read EKKLTRGWSRAQGRNNKGRITTRHRG and GSAMNPVDHPHGGGEGKAPIGR. Residues 45 to 55 show a composition bias toward basic residues; the sequence is NKGRITTRHRG.

The protein belongs to the universal ribosomal protein uL2 family. As to quaternary structure, part of the 50S ribosomal subunit.

It is found in the plastid. The protein is Large ribosomal subunit protein uL2c (rpl2) of Prototheca wickerhamii.